Reading from the N-terminus, the 702-residue chain is Cytolytic toxin-alpha (702 aa).

The tract at residues 2-265 is structural MACPF/CDC pore-forming domain; the sequence is SSDIIMAGLG…KADLLVRDIS (264 aa). Residues Asn93, Asn100, Asn201, Asn287, and Asn311 are each glycosylated (N-linked (GlcNAc...) asparagine). The segment at 266–385 is structural FAT domain; sequence QGLVRKVHSI…DIIEETKHKA (120 aa). The tract at residues 386-513 is thioredoxin (THX) domain; that stretch reads VLSQSQMVKD…PIISAVEKIV (128 aa). Positions 505-702 constitute a B30.2/SPRY domain; that stretch reads IISAVEKIVD…RPYHGTVRLL (198 aa). An N-linked (GlcNAc...) asparagine glycan is attached at Asn530.

The protein belongs to the SNTX/VTX toxin family. As to quaternary structure, heterodimer of alpha and beta subunits; non-covalently linked. Also associates into tetramers or even higher aggregates. Post-translationally, intrachain disulfide bonds may be present in the heterodimer. As to expression, expressed by the venom gland.

It is found in the secreted. This heterodimer induces potent hemolytic activities (when tested on rabbit erythrocytes, EC(50)=25-56 ng/mL) due to its ability to form pores in the cell membrane. The pore may be composed of 10 alpha/beta heterodimers. The toxin shows cardiovascular effects that include a vasorelaxant action that may involve the L-arginine-nitric oxid synthase pathway. In addition, it displays edema-inducing activities, increases vascular permeability. It also shows myotoxic activities and interferes irreversibly with neuromuscular function. It also induces irreversible platelet aggregation in rabbit or rat (but not in human or mouse) whole blood. In addition, it has been observed to increase spontaneous quantal acetylcholine release from isolated frog cutaneous pectoris motor endings. In Scorpaena plumieri (Spotted scorpionfish), this protein is Cytolytic toxin-alpha.